The following is a 229-amino-acid chain: Protein rep (229 aa).

Residue tyrosine 214 coordinates DNA.

It belongs to the Gram-positive plasmids replication protein type 1 family.

Produces a single-strand nick in a specific site of the plasmid, and this nick results in single-strand replication by rolling circle mechanism. This chain is Protein rep, found in Staphylococcus aureus.